Consider the following 255-residue polypeptide: Pyrroloquinoline-quinone synthase (255 aa).

This sequence belongs to the PqqC family.

The catalysed reaction is 6-(2-amino-2-carboxyethyl)-7,8-dioxo-1,2,3,4,7,8-hexahydroquinoline-2,4-dicarboxylate + 3 O2 = pyrroloquinoline quinone + 2 H2O2 + 2 H2O + H(+). The protein operates within cofactor biosynthesis; pyrroloquinoline quinone biosynthesis. In terms of biological role, ring cyclization and eight-electron oxidation of 3a-(2-amino-2-carboxyethyl)-4,5-dioxo-4,5,6,7,8,9-hexahydroquinoline-7,9-dicarboxylic-acid to PQQ. In Granulibacter bethesdensis (strain ATCC BAA-1260 / CGDNIH1), this protein is Pyrroloquinoline-quinone synthase.